A 761-amino-acid chain; its full sequence is 5-methyltetrahydropteroyltriglutamate--homocysteine methyltransferase (761 aa).

Residues 16–19 (RELK) and Lys118 each bind 5-methyltetrahydropteroyltri-L-glutamate. L-homocysteine is bound by residues 436–438 (IGS) and Glu489. L-methionine is bound by residues 436-438 (IGS) and Glu489. Residues 520 to 521 (RC) and Trp566 each bind 5-methyltetrahydropteroyltri-L-glutamate. L-homocysteine is bound at residue Asp604. Asp604 is an L-methionine binding site. Glu610 is a 5-methyltetrahydropteroyltri-L-glutamate binding site. Zn(2+) contacts are provided by His646, Cys648, and Glu670. His699 acts as the Proton donor in catalysis. Cys731 serves as a coordination point for Zn(2+).

Belongs to the vitamin-B12 independent methionine synthase family. Requires Zn(2+) as cofactor.

The catalysed reaction is 5-methyltetrahydropteroyltri-L-glutamate + L-homocysteine = tetrahydropteroyltri-L-glutamate + L-methionine. It participates in amino-acid biosynthesis; L-methionine biosynthesis via de novo pathway; L-methionine from L-homocysteine (MetE route): step 1/1. Catalyzes the transfer of a methyl group from 5-methyltetrahydrofolate to homocysteine resulting in methionine formation. The chain is 5-methyltetrahydropteroyltriglutamate--homocysteine methyltransferase from Vibrio cholerae serotype O1 (strain ATCC 39315 / El Tor Inaba N16961).